A 440-amino-acid polypeptide reads, in one-letter code: MFLAQEIIRKKRDGHALSDEEIRFFINGIRDNTISEGQIAALAMTIFFHDMTMPERVSLTMAMRDSGTVLDWKSLHLNGPIVDKHSTGGVGDVTSLMLGPMVAACGGYIPMISGRGLGHTGGTLDKLESIPGFDIFPDDNRFREIIKDVGVAIIGQTSSLAPADKRFYATRDITATVDSIPLITASILAKKLAEGLDALVMDVKVGSGAFMPTYELSEALAEAIVGVANGAGVRTTALLTDMNQVLASSAGNAVEVREAVQFLTGEYRNPRLFDVTMALCVEMLISGKLAKDDAEARAKLQAVLDNGKAAEVFGRMVAAQKGPTDFVENYAKYLPTAMLTKAVYADTEGFVSEMDARALGMAVVAMGGGRRQASDTIDYSVGFTDMARLGDQVDGQRPLAVIHAKDENSWQEAAKAVKAAIKLADKAPESTPTVYRRISE.

Belongs to the thymidine/pyrimidine-nucleoside phosphorylase family. Homodimer.

The catalysed reaction is thymidine + phosphate = 2-deoxy-alpha-D-ribose 1-phosphate + thymine. It functions in the pathway pyrimidine metabolism; dTMP biosynthesis via salvage pathway; dTMP from thymine: step 1/2. The enzymes which catalyze the reversible phosphorolysis of pyrimidine nucleosides are involved in the degradation of these compounds and in their utilization as carbon and energy sources, or in the rescue of pyrimidine bases for nucleotide synthesis. This is Thymidine phosphorylase from Shigella boydii serotype 4 (strain Sb227).